Consider the following 394-residue polypeptide: Deoxyguanosinetriphosphate triphosphohydrolase-like protein (394 aa).

A disordered region spans residues 1-34 (MSSSPFFVPRAPYAEDPAKSRGRRFPEDESRTRT). The span at 16–34 (DPAKSRGRRFPEDESRTRT) shows a compositional bias: basic and acidic residues. The 141-residue stretch at 70-210 (RLTHSLEVAQ…AALADDIAYN (141 aa)) folds into the HD domain.

It belongs to the dGTPase family. Type 2 subfamily.

In Caulobacter sp. (strain K31), this protein is Deoxyguanosinetriphosphate triphosphohydrolase-like protein.